The following is a 372-amino-acid chain: Protein RecA (372 aa).

An ATP-binding site is contributed by 81–88; it reads GPESSGKT.

The protein belongs to the RecA family.

It is found in the cytoplasm. Can catalyze the hydrolysis of ATP in the presence of single-stranded DNA, the ATP-dependent uptake of single-stranded DNA by duplex DNA, and the ATP-dependent hybridization of homologous single-stranded DNAs. It interacts with LexA causing its activation and leading to its autocatalytic cleavage. The protein is Protein RecA of Haemophilus ducreyi (strain 35000HP / ATCC 700724).